We begin with the raw amino-acid sequence, 365 residues long: MKIDGRPYRTIFPEADGDAVMVIDQTRLPFAFELKRLTNLDDAAVAIRTMVVRGAPLIGVTAAYGMALAMRQDASEAGIERASATLAATRPTAINLRWALDRMAAVLRRAPESAREALAFTEAAAIADEDVASCRAIGEHGAKILSEIAAKKDGPVNVLTHCNAGWLATVDWGTALAPIYVAHDAGVPVHVFVDETRPRNQGAALTAFELNAHGVPHTVIADNAGGHLMQHGQVDVCIVGSDRTTASGDVCNKIGTYLKALAATDNRIPFYAALPFSTIDWTLSDGVRDIPIEERDAREVTHLTGRTDDGAFATVAVVSPGSPVANPAFDVTPARLVTGIITERGVCDASEDGLAGLYPERRRAA.

Residues 53 to 55 (RGA), Arg-90, and Gln-201 each bind substrate. Catalysis depends on Asp-242, which acts as the Proton donor. 252–253 (NK) lines the substrate pocket.

This sequence belongs to the eIF-2B alpha/beta/delta subunits family. MtnA subfamily.

The enzyme catalyses 5-(methylsulfanyl)-alpha-D-ribose 1-phosphate = 5-(methylsulfanyl)-D-ribulose 1-phosphate. It functions in the pathway amino-acid biosynthesis; L-methionine biosynthesis via salvage pathway; L-methionine from S-methyl-5-thio-alpha-D-ribose 1-phosphate: step 1/6. Functionally, catalyzes the interconversion of methylthioribose-1-phosphate (MTR-1-P) into methylthioribulose-1-phosphate (MTRu-1-P). The protein is Methylthioribose-1-phosphate isomerase of Methylorubrum extorquens (strain CM4 / NCIMB 13688) (Methylobacterium extorquens).